A 419-amino-acid chain; its full sequence is Erythromycin esterase type II (419 aa).

Its function is as follows. This enzyme confers resistance to erythromycin through inactivation by hydrolyzing the lactone ring of the antibiotic. In Escherichia coli, this protein is Erythromycin esterase type II (ereB).